Reading from the N-terminus, the 114-residue chain is Non-specific lipid-transfer protein 1 (114 aa).

Positions 1-23 (MEMVSKIACFVLLCMVVVAPHAE) are cleaved as a signal peptide. 4 disulfide bridges follow: Cys-27–Cys-73, Cys-37–Cys-50, Cys-51–Cys-96, and Cys-71–Cys-110.

Belongs to the plant LTP family.

Functionally, plant non-specific lipid-transfer proteins transfer phospholipids as well as galactolipids across membranes. May play a role in wax or cutin deposition in the cell walls of expanding epidermal cells and certain secretory tissues. In Solanum pennellii (Tomato), this protein is Non-specific lipid-transfer protein 1 (LTP1).